Here is a 122-residue protein sequence, read N- to C-terminus: Large ribosomal subunit protein uL14 (122 aa).

The protein belongs to the universal ribosomal protein uL14 family. As to quaternary structure, part of the 50S ribosomal subunit. Forms a cluster with proteins L3 and L19. In the 70S ribosome, L14 and L19 interact and together make contacts with the 16S rRNA in bridges B5 and B8.

Functionally, binds to 23S rRNA. Forms part of two intersubunit bridges in the 70S ribosome. This is Large ribosomal subunit protein uL14 from Helicobacter hepaticus (strain ATCC 51449 / 3B1).